The chain runs to 72 residues: Translation initiation factor IF-1 (72 aa).

The region spanning 2–72 (AKDDVIEVDG…TRGRITYRFK (71 aa)) is the S1-like domain.

The protein belongs to the IF-1 family. In terms of assembly, component of the 30S ribosomal translation pre-initiation complex which assembles on the 30S ribosome in the order IF-2 and IF-3, IF-1 and N-formylmethionyl-tRNA(fMet); mRNA recruitment can occur at any time during PIC assembly.

The protein resides in the cytoplasm. In terms of biological role, one of the essential components for the initiation of protein synthesis. Stabilizes the binding of IF-2 and IF-3 on the 30S subunit to which N-formylmethionyl-tRNA(fMet) subsequently binds. Helps modulate mRNA selection, yielding the 30S pre-initiation complex (PIC). Upon addition of the 50S ribosomal subunit IF-1, IF-2 and IF-3 are released leaving the mature 70S translation initiation complex. The sequence is that of Translation initiation factor IF-1 from Lactococcus lactis subsp. lactis (strain IL1403) (Streptococcus lactis).